The sequence spans 183 residues: uncharacterized protein (183 aa).

The tract at residues D54–A89 is disordered.

This is an uncharacterized protein from Human cytomegalovirus (strain AD169) (HHV-5).